A 380-amino-acid chain; its full sequence is ATPase ASNA1 homolog (380 aa).

48–55 lines the ATP pocket; the sequence is KGGVGKTT. Residue Asp77 is part of the active site. ATP contacts are provided by Glu248 and Asn275.

Belongs to the arsA ATPase family. In terms of assembly, homodimer.

It is found in the cytoplasm. The protein resides in the endoplasmic reticulum. Its function is as follows. ATPase required for the post-translational delivery of tail-anchored (TA) proteins to the endoplasmic reticulum. Recognizes and selectively binds the transmembrane domain of TA proteins in the cytosol. This complex then targets to the endoplasmic reticulum by membrane-bound receptors, where the tail-anchored protein is released for insertion. This process is regulated by ATP binding and hydrolysis. ATP binding drives the homodimer towards the closed dimer state, facilitating recognition of newly synthesized TA membrane proteins. ATP hydrolysis is required for insertion. Subsequently, the homodimer reverts towards the open dimer state, lowering its affinity for the membrane-bound receptor, and returning it to the cytosol to initiate a new round of targeting. The polypeptide is ATPase ASNA1 homolog (Plasmodium yoelii yoelii).